The sequence spans 128 residues: MIVRTLDECRNSERRVVSDNWESVRMLLKDDNMGFSFHITTIYEGTETHIHYQNHLESVFCMSGEGEIEVVGGETYPIKPGTLYILDKNDEHYLRAYKNKEMVMACVFNPPITGAEVHDENGVYPLVD.

The protein belongs to the ectoine synthase family.

It catalyses the reaction (2S)-4-acetamido-2-aminobutanoate = L-ectoine + H2O. It functions in the pathway amine and polyamine biosynthesis; ectoine biosynthesis; L-ectoine from L-aspartate 4-semialdehyde: step 3/3. Catalyzes the circularization of gamma-N-acetyl-alpha,gamma-diaminobutyric acid (ADABA) to ectoine (1,4,5,6-tetrahydro-2-methyl-4-pyrimidine carboxylic acid), which is an excellent osmoprotectant. The protein is L-ectoine synthase of Vibrio campbellii (strain ATCC BAA-1116).